Reading from the N-terminus, the 426-residue chain is MLDPKLFRTQLPEIAAKLAKRGFTLDVERIQQLEDTRKVVQVECENLQQERNTRSKSIGKAKAAGEDIAPLLKEVDNLKSALSEAEQKLGAVQAELDEIIAGVPNVLADEVPEGKNEDDNVEVSQWGTPREFDFEVKDHVDVGAGLKGLDFETAGKITGSRFAVMTGAVARLHRALIQFMLNTHTGEHGYDEIYVPYIVNKDSLYGTGQLPKFEEDLFKLRDDRDFYLIPTAEVPVTNMMRDEIIDEKQLPVRFACHTPCFRSEAGSYGRDTRGMIRQHQFEKVELVQFVKPGESMAALESLVGHAETILQKLSLPYRKVILCGGDTGFSSTKTYDLEVWLPSQNTYREISSCSNFGDFQARRMKARYRNAETGKPELLHTLNGSGLAIGRTLVAILENYQQADGSLAIPEVLQPFMNGQTSISAP.

231 to 233 contributes to the L-serine binding site; the sequence is TAE. Position 262 to 264 (262 to 264) interacts with ATP; that stretch reads RSE. E285 provides a ligand contact to L-serine. Residue 349 to 352 participates in ATP binding; that stretch reads EISS. Residue S385 coordinates L-serine.

The protein belongs to the class-II aminoacyl-tRNA synthetase family. Type-1 seryl-tRNA synthetase subfamily. Homodimer. The tRNA molecule binds across the dimer.

The protein resides in the cytoplasm. It catalyses the reaction tRNA(Ser) + L-serine + ATP = L-seryl-tRNA(Ser) + AMP + diphosphate + H(+). The catalysed reaction is tRNA(Sec) + L-serine + ATP = L-seryl-tRNA(Sec) + AMP + diphosphate + H(+). Its pathway is aminoacyl-tRNA biosynthesis; selenocysteinyl-tRNA(Sec) biosynthesis; L-seryl-tRNA(Sec) from L-serine and tRNA(Sec): step 1/1. Its function is as follows. Catalyzes the attachment of serine to tRNA(Ser). Is also able to aminoacylate tRNA(Sec) with serine, to form the misacylated tRNA L-seryl-tRNA(Sec), which will be further converted into selenocysteinyl-tRNA(Sec). The polypeptide is Serine--tRNA ligase (Teredinibacter turnerae (strain ATCC 39867 / T7901)).